The following is a 360-amino-acid chain: Threonine synthase (360 aa).

Position 69 is an N6-(pyridoxal phosphate)lysine (lysine 69). Residues asparagine 95, 196-200, and threonine 326 each bind pyridoxal 5'-phosphate; that span reads GNAGN.

The protein belongs to the threonine synthase family. Homodimer. The cofactor is pyridoxal 5'-phosphate.

The catalysed reaction is O-phospho-L-homoserine + H2O = L-threonine + phosphate. The protein operates within amino-acid biosynthesis; L-threonine biosynthesis; L-threonine from L-aspartate: step 5/5. In terms of biological role, catalyzes the gamma-elimination of phosphate from L-phosphohomoserine and the beta-addition of water to produce L-threonine. The polypeptide is Threonine synthase (thrC) (Mycobacterium leprae (strain TN)).